The following is a 461-amino-acid chain: Phosphomethylpyrimidine synthase (461 aa).

Residues asparagine 80, methionine 109, tyrosine 139, histidine 175, 195 to 197 (SRG), 236 to 239 (DSLR), and glutamate 275 contribute to the substrate site. Histidine 279 contributes to the Zn(2+) binding site. Substrate is bound at residue tyrosine 302. Histidine 343 contacts Zn(2+). [4Fe-4S] cluster contacts are provided by cysteine 423, cysteine 426, and cysteine 431.

It belongs to the ThiC family. [4Fe-4S] cluster is required as a cofactor.

It carries out the reaction 5-amino-1-(5-phospho-beta-D-ribosyl)imidazole + S-adenosyl-L-methionine = 4-amino-2-methyl-5-(phosphooxymethyl)pyrimidine + CO + 5'-deoxyadenosine + formate + L-methionine + 3 H(+). It participates in cofactor biosynthesis; thiamine diphosphate biosynthesis. In terms of biological role, catalyzes the synthesis of the hydroxymethylpyrimidine phosphate (HMP-P) moiety of thiamine from aminoimidazole ribotide (AIR) in a radical S-adenosyl-L-methionine (SAM)-dependent reaction. The sequence is that of Phosphomethylpyrimidine synthase from Picosynechococcus sp. (strain ATCC 27264 / PCC 7002 / PR-6) (Agmenellum quadruplicatum).